Consider the following 457-residue polypeptide: Methanethiol oxidase (457 aa).

It belongs to the selenium-binding protein family.

Its subcellular location is the nucleus. It is found in the cytoplasm. The protein localises to the cytosol. It localises to the membrane. The catalysed reaction is methanethiol + O2 + H2O = hydrogen sulfide + formaldehyde + H2O2 + H(+). The protein operates within organosulfur degradation. In terms of biological role, catalyzes the oxidation of methanethiol, an organosulfur compound known to be produced in substantial amounts by gut bacteria. Selenium-binding protein which may be involved in the sensing of reactive xenobiotics in the cytoplasm. May be involved in intra-Golgi protein transport. The chain is Methanethiol oxidase (selenbp1) from Danio rerio (Zebrafish).